The following is a 596-amino-acid chain: Elongation factor 4 (596 aa).

Positions 2-184 constitute a tr-type G domain; that stretch reads KHIRNFSIIA…VIVAQIPPPE (183 aa). Residues 14–19 and 131–134 contribute to the GTP site; these read DHGKST and NKID.

The protein belongs to the TRAFAC class translation factor GTPase superfamily. Classic translation factor GTPase family. LepA subfamily.

Its subcellular location is the cell inner membrane. The enzyme catalyses GTP + H2O = GDP + phosphate + H(+). Functionally, required for accurate and efficient protein synthesis under certain stress conditions. May act as a fidelity factor of the translation reaction, by catalyzing a one-codon backward translocation of tRNAs on improperly translocated ribosomes. Back-translocation proceeds from a post-translocation (POST) complex to a pre-translocation (PRE) complex, thus giving elongation factor G a second chance to translocate the tRNAs correctly. Binds to ribosomes in a GTP-dependent manner. The sequence is that of Elongation factor 4 from Shewanella woodyi (strain ATCC 51908 / MS32).